The following is an 818-amino-acid chain: G-type lectin S-receptor-like serine/threonine-protein kinase At1g67520 (818 aa).

Residues 1 to 22 (MCSNGIFVSLLTLSLLLGKSCS) form the signal peptide. Residues 23-387 (ETDTLHQGQF…NENKKVAAWH (365 aa)) are Extracellular-facing. Residues 24 to 149 (TDTLHQGQFL…DADGSMKRVL (126 aa)) form the Bulb-type lectin domain. N-linked (GlcNAc...) asparagine glycosylation is found at N123, N199, and N337. The PAN domain maps to 290 to 379 (CLAAGYVVRD…PRTIYIRGNE (90 aa)). Disulfide bonds link C330–C353 and C334–C340. The helical transmembrane segment at 388–408 (IVVATLFLMTPIIWFIIYLVL) threads the bilayer. At 409–818 (RKFNVKGRNC…SITITVLEAR (410 aa)) the chain is on the cytoplasmic side. Residues 496–785 (FSDENKLGEG…ALSLPKEPAF (290 aa)) form the Protein kinase domain. ATP contacts are provided by residues 502–510 (LGEGGFGPV) and K524. S530 is modified (phosphoserine). The interval 585 to 602 (LRKNVLDWTLRFRIMEGI) is caM-binding. D621 (proton acceptor) is an active-site residue. Residues S625 and S638 each carry the phosphoserine modification. Phosphothreonine is present on T655. Phosphoserine occurs at positions 699 and 807. T813 carries the post-translational modification Phosphothreonine.

This sequence belongs to the protein kinase superfamily. Ser/Thr protein kinase family.

It is found in the cell membrane. The enzyme catalyses L-seryl-[protein] + ATP = O-phospho-L-seryl-[protein] + ADP + H(+). It carries out the reaction L-threonyl-[protein] + ATP = O-phospho-L-threonyl-[protein] + ADP + H(+). This is G-type lectin S-receptor-like serine/threonine-protein kinase At1g67520 from Arabidopsis thaliana (Mouse-ear cress).